We begin with the raw amino-acid sequence, 424 residues long: Tyrosine--tRNA ligase (424 aa).

Y37 contributes to the L-tyrosine binding site. The short motif at P42–H51 is the 'HIGH' region element. The L-tyrosine site is built by Y175 and Q179. The 'KMSKS' region signature appears at K235–T239. K238 provides a ligand contact to ATP. An S4 RNA-binding domain is found at A357 to G414.

It belongs to the class-I aminoacyl-tRNA synthetase family. TyrS type 1 subfamily. As to quaternary structure, homodimer.

The protein resides in the cytoplasm. The catalysed reaction is tRNA(Tyr) + L-tyrosine + ATP = L-tyrosyl-tRNA(Tyr) + AMP + diphosphate + H(+). Functionally, catalyzes the attachment of tyrosine to tRNA(Tyr) in a two-step reaction: tyrosine is first activated by ATP to form Tyr-AMP and then transferred to the acceptor end of tRNA(Tyr). The polypeptide is Tyrosine--tRNA ligase (Salmonella enteritidis PT4 (strain P125109)).